A 517-amino-acid chain; its full sequence is Tyrosine-protein kinase Src42A (517 aa).

Residues 1–47 form a disordered region; sequence MGNCLTTQKGEPDKPADRIKLDDPPTIGVGVGVPQIPMPSHAGQPPE. Positions 10 to 23 are enriched in basic and acidic residues; sequence GEPDKPADRIKLDD. The region spanning 63-124 is the SH3 domain; it reads ANAKIFVALY…PSNYVAKLKS (62 aa). An SH2 domain is found at 130-222; sequence WYFRKIKRIE…GLCVNLCKPC (93 aa). The Protein kinase domain maps to 248–504; the sequence is LKFVRKLGSG…TLQWKLEDFY (257 aa). ATP is bound by residues 254–262 and K276; that span reads LGSGQFGDV. D370 acts as the Proton acceptor in catalysis.

It belongs to the protein kinase superfamily. Tyr protein kinase family. SRC subfamily. Ubiquitous in early embryos, in stages 13-16 expression is seen in visceral mesoderm, hindgut, brain, anal pads and ventral ganglions. In larvae, expression is in CNS, wing disk, leg disk and photoreceptor precursors in the eye-antenna disks posterior to the morphogenetic furrow.

It carries out the reaction L-tyrosyl-[protein] + ATP = O-phospho-L-tyrosyl-[protein] + ADP + H(+). In terms of biological role, required directly or indirectly for the phosphorylation of drpr which is necessary for the interaction of drpr with shark and subsequent glial phagocytic activity. Together with drpr and shark, promotes the migration of macrophages to sites of wounding as part of a signaling cascade where Src42A detects production of hydrogen peroxide at wound sites which triggers phosphorylation of drpr and subsequent recruitment and activation of shark. Essential for correct eye morphogenesis (ommatidial R7 neuron formation) which requires the Ras1/MAPK signal transduction pathway. May be involved in the regulation of cytoskeleton organization and cell-cell contacts in developing ommatidia. Involved in phosphorylation of Dscam1, a cell surface receptor involved in targeting of growing axons during eye morphogenesis, and its interaction partner the SH2/SH3 adapter protein dock/dreadlocks. During embryogenesis, involved in regulation of dorsal closure where it may have a role in activating the JNK pathway in leading edge cells during this process. In Drosophila melanogaster (Fruit fly), this protein is Tyrosine-protein kinase Src42A.